The chain runs to 85 residues: Translation initiation factor IF-1 1 (85 aa).

The 72-residue stretch at Met-1 to Leu-72 folds into the S1-like domain.

Belongs to the IF-1 family. In terms of assembly, component of the 30S ribosomal translation pre-initiation complex which assembles on the 30S ribosome in the order IF-2 and IF-3, IF-1 and N-formylmethionyl-tRNA(fMet); mRNA recruitment can occur at any time during PIC assembly.

The protein localises to the cytoplasm. One of the essential components for the initiation of protein synthesis. Stabilizes the binding of IF-2 and IF-3 on the 30S subunit to which N-formylmethionyl-tRNA(fMet) subsequently binds. Helps modulate mRNA selection, yielding the 30S pre-initiation complex (PIC). Upon addition of the 50S ribosomal subunit IF-1, IF-2 and IF-3 are released leaving the mature 70S translation initiation complex. This is Translation initiation factor IF-1 1 from Aromatoleum aromaticum (strain DSM 19018 / LMG 30748 / EbN1) (Azoarcus sp. (strain EbN1)).